Reading from the N-terminus, the 263-residue chain is Acyl-[acyl-carrier-protein]--UDP-N-acetylglucosamine O-acyltransferase (263 aa).

Belongs to the transferase hexapeptide repeat family. LpxA subfamily. As to quaternary structure, homotrimer.

It is found in the cytoplasm. It catalyses the reaction a (3R)-hydroxyacyl-[ACP] + UDP-N-acetyl-alpha-D-glucosamine = a UDP-3-O-[(3R)-3-hydroxyacyl]-N-acetyl-alpha-D-glucosamine + holo-[ACP]. It participates in glycolipid biosynthesis; lipid IV(A) biosynthesis; lipid IV(A) from (3R)-3-hydroxytetradecanoyl-[acyl-carrier-protein] and UDP-N-acetyl-alpha-D-glucosamine: step 1/6. In terms of biological role, involved in the biosynthesis of lipid A, a phosphorylated glycolipid that anchors the lipopolysaccharide to the outer membrane of the cell. The sequence is that of Acyl-[acyl-carrier-protein]--UDP-N-acetylglucosamine O-acyltransferase from Xylella fastidiosa (strain Temecula1 / ATCC 700964).